The sequence spans 244 residues: tRNA (guanine-N(7)-)-methyltransferase (244 aa).

The segment at methionine 1–arginine 24 is disordered. Residues glutamate 74, glutamate 99, aspartate 126, and aspartate 149 each contribute to the S-adenosyl-L-methionine site. Aspartate 149 is an active-site residue. Residues lysine 153, aspartate 185, and threonine 222–glutamate 225 contribute to the substrate site.

This sequence belongs to the class I-like SAM-binding methyltransferase superfamily. TrmB family.

It carries out the reaction guanosine(46) in tRNA + S-adenosyl-L-methionine = N(7)-methylguanosine(46) in tRNA + S-adenosyl-L-homocysteine. It participates in tRNA modification; N(7)-methylguanine-tRNA biosynthesis. Catalyzes the formation of N(7)-methylguanine at position 46 (m7G46) in tRNA. The polypeptide is tRNA (guanine-N(7)-)-methyltransferase (Pseudomonas savastanoi pv. phaseolicola (strain 1448A / Race 6) (Pseudomonas syringae pv. phaseolicola (strain 1448A / Race 6))).